We begin with the raw amino-acid sequence, 194 residues long: AN1-type zinc finger protein 2A (194 aa).

2 AN1-type zinc fingers span residues Pro4–Val52 and Lys94–Ile142. Cys10, Cys15, Cys25, Cys28, Cys33, His36, His42, Cys44, Cys100, Cys105, Cys115, Cys118, Cys123, His126, His132, and Cys134 together coordinate Zn(2+). Residues Gly145–Ser164 form a disordered region.

Its subcellular location is the cytoplasm. The protein localises to the nucleus. The polypeptide is AN1-type zinc finger protein 2A (ZFAND2A) (Pongo abelii (Sumatran orangutan)).